Consider the following 204-residue polypeptide: Refilin-A (204 aa).

The disordered stretch occupies residues 1–52 (MVGHLHLQAMGDTREQSRDGLLDSPDSGLPPSPSPSPPFYALSPGTLDTRTT). A compositionally biased stretch (basic and acidic residues) spans 12–21 (DTREQSRDGL). Over residues 28 to 38 (GLPPSPSPSPP) the composition is skewed to pro residues. Residue Arg151 is modified to Asymmetric dimethylarginine.

The protein belongs to the Refilin family. In terms of assembly, interacts with FLNA and FLNB. As to expression, detected in various tissues, with highest expression in lung, followed by spleen.

It is found in the cytoplasm. Its subcellular location is the cytoskeleton. Involved in the regulation of the perinuclear actin network and nuclear shape through interaction with filamins. Plays an essential role in the formation of cartilaginous skeletal elements. The protein is Refilin-A (Rflna) of Mus musculus (Mouse).